Here is a 217-residue protein sequence, read N- to C-terminus: Large ribosomal subunit protein uL1 (217 aa).

An N-acetylserine modification is found at Ser-2. The residue at position 11 (Tyr-11) is a Phosphotyrosine. An N6-acetyllysine mark is found at Lys-91 and Lys-106. Lys-118 carries the post-translational modification N6-acetyllysine; alternate. A Glycyl lysine isopeptide (Lys-Gly) (interchain with G-Cter in SUMO1); alternate cross-link involves residue Lys-118. Lys-118 is covalently cross-linked (Glycyl lysine isopeptide (Lys-Gly) (interchain with G-Cter in SUMO2); alternate). A Glycyl lysine isopeptide (Lys-Gly) (interchain with G-Cter in SUMO2) cross-link involves residue Lys-161.

This sequence belongs to the universal ribosomal protein uL1 family. In terms of assembly, component of the large ribosomal subunit.

It localises to the cytoplasm. In terms of biological role, component of the large ribosomal subunit. The ribosome is a large ribonucleoprotein complex responsible for the synthesis of proteins in the cell. The sequence is that of Large ribosomal subunit protein uL1 (Rpl10a) from Mus musculus (Mouse).